Here is a 124-residue protein sequence, read N- to C-terminus: Predicted GPI-anchored protein 11 (124 aa).

The N-terminal stretch at 1-18 (MKFQFVTALALASTMAVA) is a signal peptide. The disordered stretch occupies residues 38–59 (REGGSTGAELQDNNQPTAGLFG). Residue Ser-107 is the site of GPI-anchor amidated serine attachment. Positions 108-124 (GAAGGVGNLFSGILGGL) are cleaved as a propeptide — removed in mature form.

Its subcellular location is the cell membrane. This is Predicted GPI-anchored protein 11 (PGA11) from Candida albicans (strain SC5314 / ATCC MYA-2876) (Yeast).